We begin with the raw amino-acid sequence, 86 residues long: Large ribosomal subunit protein bL27 (86 aa).

Over residues 1–10 the composition is skewed to gly residues; the sequence is MAQKKGGGST. The tract at residues 1–21 is disordered; the sequence is MAQKKGGGSTRNGRDSESKRL.

The protein belongs to the bacterial ribosomal protein bL27 family.

In Cupriavidus taiwanensis (strain DSM 17343 / BCRC 17206 / CCUG 44338 / CIP 107171 / LMG 19424 / R1) (Ralstonia taiwanensis (strain LMG 19424)), this protein is Large ribosomal subunit protein bL27.